The chain runs to 471 residues: FAD-dependent monooxygenase andE (471 aa).

FAD is bound by residues Glu-35, Gly-49, and Arg-108. Residue Tyr-216 is part of the active site. Residues Asp-308 and Ala-321 each contribute to the FAD site. 2 helical membrane-spanning segments follow: residues 403–423 (LANI…LPFP) and 443–463 (TPFA…LLGL).

Belongs to the paxM FAD-dependent monooxygenase family. Requires FAD as cofactor.

It is found in the membrane. It participates in secondary metabolite biosynthesis; terpenoid biosynthesis. FAD-dependent monooxygenase; part of the gene cluster that mediates the biosynthesis of anditomin, a fungal meroterpenoid. The first step of the pathway is the synthesis of 3,5-dimethylorsellinic acid (DMOA) by the polyketide synthase andM. DMOA is then converted to the phthalide compound 5,7-dihydroxy-4,6-dimethylphthalide (DHDMP) by the cytochrome P450 monooxygenase andK, which is further prenylated by the prenyltransferase andD to yield farnesyl-DHDMP. Further epoxidation by the FAD-dependent monooxygenase andE leads to epoxyfarnesyl-DHDMP. The next step involves the terpene cyclase andB that converts epoxyfarnesyl-DHDMP into preandiloid A through opening of the epoxide ring followed by the cyclization of the farnesyl moiety. Preandiloid A is in turn oxidized at the C-3 hydroxyl group to yield preandiloid B by the dehydrogenase andC. The dioxygenase andA is solely responsible for the dehydrogenation of preandiloid B leading to the enone preandiloid C, as well as for the intriguing structural rearrangement to generate the bicyclo[2.2.2]octane core, transforming preandiloid C into andiconin. FAD-binding monooxygenase andJ then produces andilesin D which is reduced by dehydrogenase andI to yield andilesin A. Action of acetyltransferase andG followed by a spontaneous acetate elimination leads then to andilesin B, which is in turn substrate of the short chain dehydrogenase andH to yield andilesin C. Finally, the dioxygenase andF catalyzes the transformation of andilesin C to anditomin. The sequence is that of FAD-dependent monooxygenase andE from Emericella variicolor (Aspergillus stellatus).